The sequence spans 412 residues: Divalent metal cation transporter MntH (412 aa).

Helical transmembrane passes span 19 to 39, 46 to 66, 94 to 114, 122 to 142, 156 to 176, 196 to 216, 241 to 261, 290 to 310, 322 to 342, 348 to 368, and 392 to 412; these read LALMGPAFIAAIGYIDPGNFA, ASFGYQLLWVVVWANLMAMLI, VWFYWVQAEIIAMATDLAEFI, LILGVSLLQGAVLTGIATFLI, VIGGLLLFVAAAYIVELFFSQ, AVFLAAGVLGATIMPHVIYLH, IAMTIAGFVNLAMMATAAAAF, IFGLSLVAAGLSSTVVGTLAG, IPLWVRRAVTMAPSFIVILMG, ILVMSQVLLSFGIALALVPLL, and AIVVLVVALNIWLLVGTALGL.

Belongs to the NRAMP family.

It localises to the cell inner membrane. In terms of biological role, h(+)-stimulated, divalent metal cation uptake system. The chain is Divalent metal cation transporter MntH from Cronobacter sakazakii (strain ATCC BAA-894) (Enterobacter sakazakii).